A 305-amino-acid chain; its full sequence is Triplex capsid protein 2 (305 aa).

This sequence belongs to the herpesviridae TRX2 protein family. In terms of assembly, interacts with TRX1 and major capisd protein/MCP.

It localises to the virion. It is found in the host nucleus. In terms of biological role, structural component of the T=16 icosahedral capsid. The capsid is composed of pentamers and hexamers of major capsid protein/MCP, which are linked together by heterotrimers called triplexes. These triplexes are formed by a single molecule of triplex protein 1/TRX1 and two copies of triplex protein 2/TRX2. Additionally, TRX1 is required for efficient transport of TRX2 to the nucleus, which is the site of capsid assembly. The chain is Triplex capsid protein 2 from Homo sapiens (Human).